The sequence spans 349 residues: ATPase GET3 (349 aa).

26–33 (KGGVGKTT) lines the ATP pocket. Residue Asp57 is part of the active site. Residues Glu242 and Asn269 each coordinate ATP. Cys281 and Cys284 together coordinate Zn(2+).

This sequence belongs to the arsA ATPase family. In terms of assembly, homodimer. Component of the Golgi to ER traffic (GET) complex, which is composed of GET1, GET2 and GET3. Within the complex, GET1 and GET2 form a heterotetramer which is stabilized by phosphatidylinositol binding and which binds to the GET3 homodimer. Interacts with the chloride channel protein GEF1.

Its subcellular location is the cytoplasm. It is found in the endoplasmic reticulum. The protein resides in the golgi apparatus. ATPase required for the post-translational delivery of tail-anchored (TA) proteins to the endoplasmic reticulum. Recognizes and selectively binds the transmembrane domain of TA proteins in the cytosol. This complex then targets to the endoplasmic reticulum by membrane-bound receptors GET1 and GET2, where the tail-anchored protein is released for insertion. This process is regulated by ATP binding and hydrolysis. ATP binding drives the homodimer towards the closed dimer state, facilitating recognition of newly synthesized TA membrane proteins. ATP hydrolysis is required for insertion. Subsequently, the homodimer reverts towards the open dimer state, lowering its affinity for the GET1-GET2 receptor, and returning it to the cytosol to initiate a new round of targeting. Cooperates with the HDEL receptor ERD2 to mediate the ATP-dependent retrieval of resident ER proteins that contain a C-terminal H-D-E-L retention signal from the Golgi to the ER. Involved in low-level resistance to the oxyanions arsenite and arsenate, and in heat tolerance. The chain is ATPase GET3 from Lodderomyces elongisporus (strain ATCC 11503 / CBS 2605 / JCM 1781 / NBRC 1676 / NRRL YB-4239) (Yeast).